The primary structure comprises 512 residues: Maturase K (512 aa).

Belongs to the intron maturase 2 family. MatK subfamily.

The protein resides in the plastid. The protein localises to the chloroplast. Usually encoded in the trnK tRNA gene intron. Probably assists in splicing its own and other chloroplast group II introns. The polypeptide is Maturase K (Zantedeschia aethiopica (White calla lily)).